The following is a 260-amino-acid chain: Apolipoprotein A-I (260 aa).

Residues Met-1 to Ala-18 form the signal peptide. Residues Ala-32 to Lys-63 are 3 X approximate tandem repeats. Tandem repeats lie at residues Thr-64–Ser-85 and Met-87–Asn-107. Positions Thr-64 to Ser-260 are 10 X approximate tandem repeats. Residues Val-108–Ala-118 form a 3; half-length repeat. Repeat copies occupy residues Pro-119–Thr-140, Pro-141–Glu-162, Pro-163–Met-184, Pro-185–Gln-206, and Pro-207–Thr-225. Residues Val-226–Thr-236 form a 9; half-length repeat. Repeat unit 10 spans residues Pro-237 to Ser-260.

The protein belongs to the apolipoprotein A1/A4/E family. As to expression, strong expression in liver with lower expression in intestine.

It is found in the secreted. Its function is as follows. Participates in the reverse transport of cholesterol from tissues to the liver for excretion by promoting cholesterol efflux from tissues and by acting as a cofactor for the lecithin cholesterol acyltransferase (LCAT). This chain is Apolipoprotein A-I (apoa1), found in Sparus aurata (Gilthead sea bream).